Here is a 240-residue protein sequence, read N- to C-terminus: Protein OPG176 (240 aa).

The protein belongs to the orthopoxvirus OPG176 family. Tetramer. Interacts with host MYD88, TRF4, TICAM2 and MAL.

BCL2-like protein which disrupts the host immune response by inhibiting the TLR4 signaling pathway leading to NF-kappa-B activation. Acts close to the plasma membrane and targets several host TIR-domain containing adapter proteins including MYD88, TIRAP, TRIF and TICAM2. In turn, blocks the host NF-kappa-B and TRIF-mediated IRF3 activation. In Cynomys gunnisoni (Gunnison's prairie dog), this protein is Protein OPG176 (OPG176).